Reading from the N-terminus, the 158-residue chain is Glycine/sarcosine/betaine reductase complex component A (158 aa).

The active site involves Sec44. Sec44 is a non-standard amino acid (selenocysteine).

It belongs to the GrdA family. As to quaternary structure, monomer. Component of the glycine, sarcosine and betaine reductase complexes, together with components B and C.

It catalyses the reaction acetyl phosphate + [thioredoxin]-disulfide + NH4(+) + H2O = [thioredoxin]-dithiol + glycine + phosphate + H(+). The enzyme catalyses acetyl phosphate + methylamine + [thioredoxin]-disulfide + H2O = sarcosine + [thioredoxin]-dithiol + phosphate + H(+). The catalysed reaction is acetyl phosphate + trimethylamine + [thioredoxin]-disulfide + H2O = glycine betaine + [thioredoxin]-dithiol + phosphate + H(+). Its function is as follows. In the first step of glycine, betaine and sarcosine reductases, the substrate is bound to component PB via a Schiff base intermediate. Then the PB-activated substrate is nucleophilically attacked by the selenol anion of component PA to transform it to a carboxymethylated selenoether and the respective amine. By action of component PC, acetyl phosphate is formed, leaving component PA in its oxidized state. Finally component PA becomes reduced by the thioredoxin system to start a new catalytic cycle of reductive deamination. The chain is Glycine/sarcosine/betaine reductase complex component A from Alkaliphilus metalliredigens (strain QYMF).